The following is a 100-amino-acid chain: NAD(P)H-quinone oxidoreductase subunit 4L, chloroplastic (100 aa).

Transmembrane regions (helical) follow at residues 1–21 (MFGH…YGLI), 29–49 (ALMC…TFPN), and 63–83 (VFVI…VLAI).

It belongs to the complex I subunit 4L family. NDH is composed of at least 16 different subunits, 5 of which are encoded in the nucleus.

It localises to the plastid. The protein resides in the chloroplast thylakoid membrane. It carries out the reaction a plastoquinone + NADH + (n+1) H(+)(in) = a plastoquinol + NAD(+) + n H(+)(out). The catalysed reaction is a plastoquinone + NADPH + (n+1) H(+)(in) = a plastoquinol + NADP(+) + n H(+)(out). In terms of biological role, NDH shuttles electrons from NAD(P)H:plastoquinone, via FMN and iron-sulfur (Fe-S) centers, to quinones in the photosynthetic chain and possibly in a chloroplast respiratory chain. The immediate electron acceptor for the enzyme in this species is believed to be plastoquinone. Couples the redox reaction to proton translocation, and thus conserves the redox energy in a proton gradient. The protein is NAD(P)H-quinone oxidoreductase subunit 4L, chloroplastic of Huperzia lucidula (Shining clubmoss).